The chain runs to 243 residues: UPF0502 protein H16_B1091 (243 aa).

Positions 1 to 23 (MQSNHDSDASQAGDRPARPALRP) are disordered.

It belongs to the UPF0502 family.

The protein is UPF0502 protein H16_B1091 of Cupriavidus necator (strain ATCC 17699 / DSM 428 / KCTC 22496 / NCIMB 10442 / H16 / Stanier 337) (Ralstonia eutropha).